The sequence spans 456 residues: tRNA modification GTPase MnmE (456 aa).

Residues Arg25, Glu82, and Lys121 each coordinate (6S)-5-formyl-5,6,7,8-tetrahydrofolate. Residues 217–379 (GMKVVIAGRP…LKAHLKSVMG (163 aa)) form the TrmE-type G domain. Asn227 provides a ligand contact to K(+). Residues 227–232 (NAGKSS), 246–252 (TNIAGTT), and 271–274 (DTAG) contribute to the GTP site. Ser231 is a Mg(2+) binding site. Residues Thr246, Ile248, and Thr251 each contribute to the K(+) site. Thr252 is a binding site for Mg(2+). Lys456 contributes to the (6S)-5-formyl-5,6,7,8-tetrahydrofolate binding site.

The protein belongs to the TRAFAC class TrmE-Era-EngA-EngB-Septin-like GTPase superfamily. TrmE GTPase family. As to quaternary structure, homodimer. Heterotetramer of two MnmE and two MnmG subunits. Requires K(+) as cofactor.

It localises to the cytoplasm. Exhibits a very high intrinsic GTPase hydrolysis rate. Involved in the addition of a carboxymethylaminomethyl (cmnm) group at the wobble position (U34) of certain tRNAs, forming tRNA-cmnm(5)s(2)U34. The protein is tRNA modification GTPase MnmE of Saccharophagus degradans (strain 2-40 / ATCC 43961 / DSM 17024).